We begin with the raw amino-acid sequence, 537 residues long: Ceramide kinase (537 aa).

An essential for enzyme activity region spans residues 1–115; the sequence is MGATGAAEPL…CPEEQLCHLW (115 aa). A required for binding to sulfatide and phosphoinositides region spans residues 1–125; that stretch reads MGATGAAEPL…LQTLREMLEK (125 aa). Residues 128 to 278 form the DAGKc domain; the sequence is SRPKHLLVFI…MDVSSVHHNS (151 aa). ATP contacts are provided by residues 138–140 and 170–174; these read NPF and TEHAN. 195 to 198 provides a ligand contact to substrate; that stretch reads GGDG. Aspartate 197 (proton donor/acceptor) is an active-site residue. ATP is bound by residues glutamate 202, 239-241, arginine 304, and arginine 310; that span reads GST. Residues serine 340 and serine 408 each carry the phosphoserine modification. Residue 502 to 504 participates in ATP binding; it reads DGE.

It depends on Ca(2+) as a cofactor. Requires Mg(2+) as cofactor. As to expression, high level expression in heart, brain, skeletal muscle, kidney and liver; moderate in peripheral blood leukocytes and thymus; very low in spleen, small intestine, placenta and lung.

It localises to the cytoplasm. Its subcellular location is the cell membrane. The enzyme catalyses an N-acylsphing-4-enine + ATP = an N-acylsphing-4-enine 1-phosphate + ADP + H(+). It catalyses the reaction N-(hexanoyl)sphing-4-enine + ATP = N-hexanoylsphing-4-enine 1-phosphate + ADP + H(+). The catalysed reaction is N-(acetyl)-sphing-4-enine + ATP = N-(acetyl)-sphing-4-enine-1-phosphate + ADP + H(+). It carries out the reaction N-hexadecanoylsphing-4-enine + ATP = N-(hexadecanoyl)-sphing-4-enine-1-phosphate + ADP + H(+). The enzyme catalyses N-hexanoyl-(4R)-hydroxysphinganine + ATP = N-hexanoyl-(4R)-hydroxysphinganine-1-phosphate + ADP + H(+). With respect to regulation, inhibited by sulfatide. Inhibited by sphinganine, sphingenine, and N,N-Dimethylsphingosine (DMS). Cardiolipin at 0.1 uM significantly increases activity, whereas at concentrations &gt;1 uM has an inhibitory effect. Its function is as follows. Catalyzes specifically the phosphorylation of ceramide to form ceramide 1-phosphate. Acts efficiently on natural and analog ceramides (C6, C8, C16 ceramides, and C8-dihydroceramide), to a lesser extent on C2-ceramide and C6-dihydroceramide, but not on other lipids, such as various sphingosines. Shows a greater preference for D-erythro isomer of ceramides. Binds phosphoinositides. This chain is Ceramide kinase (CERK), found in Homo sapiens (Human).